The following is a 345-amino-acid chain: Uroporphyrinogen decarboxylase (345 aa).

Residues 27-31 (RQAGR), Phe-46, Asp-76, Tyr-152, Ser-207, and His-320 contribute to the substrate site.

It belongs to the uroporphyrinogen decarboxylase family. Homodimer.

The protein localises to the cytoplasm. It carries out the reaction uroporphyrinogen III + 4 H(+) = coproporphyrinogen III + 4 CO2. The protein operates within porphyrin-containing compound metabolism; protoporphyrin-IX biosynthesis; coproporphyrinogen-III from 5-aminolevulinate: step 4/4. Its function is as follows. Catalyzes the decarboxylation of four acetate groups of uroporphyrinogen-III to yield coproporphyrinogen-III. In Geobacillus thermodenitrificans (strain NG80-2), this protein is Uroporphyrinogen decarboxylase.